The chain runs to 128 residues: Small ribosomal subunit protein uS11 (128 aa).

Belongs to the universal ribosomal protein uS11 family. In terms of assembly, part of the 30S ribosomal subunit. Interacts with proteins S7 and S18. Binds to IF-3.

Its function is as follows. Located on the platform of the 30S subunit, it bridges several disparate RNA helices of the 16S rRNA. Forms part of the Shine-Dalgarno cleft in the 70S ribosome. The polypeptide is Small ribosomal subunit protein uS11 (Chromohalobacter salexigens (strain ATCC BAA-138 / DSM 3043 / CIP 106854 / NCIMB 13768 / 1H11)).